Consider the following 125-residue polypeptide: uncharacterized protein (125 aa).

The HTH cro/C1-type domain maps to 19–73; that stretch reads IYSLRLAKGLSRQQLAEVIDVTHQQLQKYEKAINRISVGRLVLIAEALDRNIDYF. A DNA-binding region (H-T-H motif) is located at residues 30–49; the sequence is RQQLAEVIDVTHQQLQKYEK.

This is an uncharacterized protein from Rickettsia conorii (strain ATCC VR-613 / Malish 7).